Consider the following 525-residue polypeptide: MERRGGGGRMLALLLAGLLGGARGFGDEEERRCDAIRIAMCQNLGYNVTKMPNLVGHELQADAELQLTTFTPLIQYGCSSQLQFFLCSVYVPMCTEKINIPIGPCGGMCLSVKRRCEPVLKEFGFAWPDSLNCSKFPPQNDHNHMCMEGPGDEEVPLHSKTSLQPGEECHSMGSNSDQYIWVKRNLDCVLKCGYDAGLYSRSAKEFTDIWMAVWASLCFISTAFTVLTFLIDSSRFSYPERPIIFLSMCYNIYSIAYIVRLTVGRERISCDFEEAAEPVLIQEGLKNTGCAIIFLLMYFFGMASSIWWVILTLTWFLAAGLKWGHEAIEMHSSYFHIAAWAIPAVKTIVILIMRLVDADELTGLCYVGNQNLDALTGFVVAPLFTYLVIGTLFIAAGLVALFKIRSNLQKDGTKTDKLERLMVKIGVFSVLYTVPATCVIACYFYEISNWAVFRYSADDSNMAVEMLKIFMSLLVGITSGMWIWSAKTLHTWQKCSNRLVNSGKVKREKRADGWVKPGKGNETVV.

A signal peptide spans 1–24 (MERRGGGGRMLALLLAGLLGGARG). The Extracellular portion of the chain corresponds to 25 to 200 (FGDEEERRCD…KCGYDAGLYS (176 aa)). Positions 28–149 (EEERRCDAIR…NDHNHMCMEG (122 aa)) constitute an FZ domain. Cystine bridges form between C33/C94, C41/C87, C78/C116, C105/C146, C109/C133, C169/C188, C192/C270, and C290/C365. N-linked (GlcNAc...) asparagine glycosylation occurs at N47. N132 carries N-linked (GlcNAc...) asparagine glycosylation. The chain crosses the membrane as a helical span at residues 201 to 231 (RSAKEFTDIWMAVWASLCFISTAFTVLTFLI). The Cytoplasmic segment spans residues 232–237 (DSSRFS). The helical transmembrane segment at 238 to 263 (YPERPIIFLSMCYNIYSIAYIVRLTV) threads the bilayer. Residues 264-287 (GRERISCDFEEAAEPVLIQEGLKN) are Extracellular-facing. Residues 288 to 321 (TGCAIIFLLMYFFGMASSIWWVILTLTWFLAAGL) form a helical membrane-spanning segment. Residues 322–324 (KWG) lie on the Cytoplasmic side of the membrane. Residues 325–353 (HEAIEMHSSYFHIAAWAIPAVKTIVILIM) traverse the membrane as a helical segment. The Extracellular portion of the chain corresponds to 354–371 (RLVDADELTGLCYVGNQN). Residues 372–406 (LDALTGFVVAPLFTYLVIGTLFIAAGLVALFKIRS) traverse the membrane as a helical segment. Residues 407–419 (NLQKDGTKTDKLE) are Cytoplasmic-facing. A helical transmembrane segment spans residues 420 to 448 (RLMVKIGVFSVLYTVPATCVIACYFYEIS). The Extracellular portion of the chain corresponds to 449-461 (NWAVFRYSADDSN). A helical transmembrane segment spans residues 462–483 (MAVEMLKIFMSLLVGITSGMWI). The Cytoplasmic portion of the chain corresponds to 484 to 525 (WSAKTLHTWQKCSNRLVNSGKVKREKRADGWVKPGKGNETVV). A Lys-Thr-X-X-X-Trp motif, mediates interaction with the PDZ domain of Dvl family members motif is present at residues 487–492 (KTLHTW). Residues 523–525 (TVV) carry the PDZ-binding motif.

It belongs to the G-protein coupled receptor Fz/Smo family. As to quaternary structure, interacts (via FZ domain) with TSKU; TSKU competes with WNT2B for binding to FZD4, inhibiting Wnt signaling and repressing peripheral eye development. As to expression, expressed in the developing kidney, interdigital spaces and optic cup.

The protein resides in the cell membrane. Receptor for Wnt proteins. Most frizzled receptors are coupled to the beta-catenin canonical signaling pathway, which leads to the activation of disheveled proteins, inhibition of GSK-3 kinase, nuclear accumulation of beta-catenin and activation of Wnt target genes. A second signaling pathway involving PKC and calcium fluxes has been seen for some family members, but it is not yet clear if it represents a distinct pathway or if it can be integrated in the canonical pathway, as PKC seems to be required for Wnt-mediated inactivation of GSK-3 kinase. Both pathways seem to involve interactions with G-proteins. May be involved in transduction and intercellular transmission of polarity information during tissue morphogenesis and/or in differentiated tissues. This Gallus gallus (Chicken) protein is Frizzled-4 (FZD4).